The primary structure comprises 97 residues: Protein RADIALIS-like 6 (97 aa).

The SANT domain maps to 7–59; sequence SSISPWTFSQNKMFERALAVYDKDTPDRWHNVAKAVGGKTVEEVKRHYDILVE.

As to expression, expressed in the micropylar endosperm surrounding globular-stage embryos but no expression was detected elsewhere, including floral tissues.

The protein localises to the nucleus. Probable transcription factor. This Arabidopsis thaliana (Mouse-ear cress) protein is Protein RADIALIS-like 6 (RL6).